A 1306-amino-acid polypeptide reads, in one-letter code: MDSLPRLTSVLTLLFSGLWHLGLTATNYNCDDPLASLLSPMAFSSSSDLTGTHSPAQLNWRVGTGGWSPADSNAQQWLQMDLGNRVEITAVATQGRYGSSDWVTSYSLMFSDTGRNWKQYKQEDSIWTFAGNMNADSVVHHKLLHSVRARFVRFVPLEWNPSGKIGMRVEVYGCSYKSDVADFDGRSSLLYRFNQKLMSTLKDVISLKFKSMQGDGVLFHGEGQRGDHITLELQKGRLALHLNLGDSKARLSSSLPSATLGSLLDDQHWHSVLIERVGKQVNFTVDKHTQHFRTKGETDALDIDYELSFGGIPVPGKPGTFLKKNFHGCIENLYYNGVNIIDLAKRRKHQIYTGNVTFSCSEPQIVPITFVNSSGSYLLLPGTPQIDGLSVSFQFRTWNKDGLLLSTELSEGSGTLLLSLEGGILRLVIQKMTERVAEILTGSNLNDGLWHSVSINARRNRITLTLDDEAAPPAPDSTWVQIYSGNSYYFGGCPDNLTDSQCLNPIKAFQGCMRLIFIDNQPKDLISVQQGSLGNFSDLHIDLCSIKDRCLPNYCEHGGSCSQSWTTFYCNCSDTSYTGATCHNSIYEQSCEVYRHQGNTAGFFYIDSDGSGPLGPLQVYCNITEDKIWTSVQHNNTELTRVRGANPEKPYAMALDYGGSMEQLEAVIDGSEHCEQEVAYHCRRSRLLNTPDGTPFTWWIGRSNERHPYWGGSPPGVQQCECGLDESCLDIQHFCNCDADKDEWTNDTGFLSFKDHLPVTQIVITDTDRSNSEAAWRIGPLRCYGDRRFWNAVSFYTEASYLHFPTFHAEFSADISFFFKTTALSGVFLENLGIKDFIRLEISSPSEITFAIDVGNGPVELVVQSPSLLNDNQWHYVRAERNLKETSLQVDNLPRSTRETSEEGHFRLQLNSQLFVGGTSSRQKGFLGCIRSLHLNGQKMDLEERAKVTSGVRPGCPGHCSSYGSICHNGGKCVEKHNGYLCDCTNSPYEGPFCKKEVSAVFEAGTSVTYMFQEPYPVTKNISLSSSAIYTDSAPSKENIALSFVTTQAPSLLLFINSSSQDFVVVLLCKNGSLQVRYHLNKEETHVFTIDADNFANRRMHHLKINREGRELTIQMDQQLRLSYNFSPEVEFRVIRSLTLGKVTENLGLDSEVAKANAMGFAGCMSSVQYNHIAPLKAALRHATVAPVTVHGTLTESSCGFMVDSDVNAVTTVHSSSDPFGKTDEREPLTNAVRSDSAVIGGVIAVVIFIIFCIIGIMTRFLYQHKQSHRTSQMKEKEYPENLDSSFRNEIDLQNTVSECKREYFI.

The signal sequence occupies residues 1-24 (MDSLPRLTSVLTLLFSGLWHLGLT). The Extracellular portion of the chain corresponds to 25–1237 (ATNYNCDDPL…PLTNAVRSDS (1213 aa)). Positions 30-174 (CDDPLASLLS…IGMRVEVYGC (145 aa)) constitute an F5/8 type C domain. A disulfide bridge connects residues C30 and C174. Laminin G-like domains are found at residues 180 to 360 (VADF…TFSC) and 367 to 544 (PITF…IDLC). N282, N355, and N496 each carry an N-linked (GlcNAc...) asparagine glycan. C329 and C360 are oxidised to a cystine. Intrachain disulfides connect C512–C544, C550–C561, and C555–C570. The EGF-like 1 domain maps to 546–583 (IKDRCLPNYCEHGGSCSQSWTTFYCNCSDTSYTGATCH). N571 is a glycosylation site (N-linked (GlcNAc...) asparagine). Residues C572 and C582 are joined by a disulfide bond. One can recognise a Fibrinogen C-terminal domain in the interval 584-790 (NSIYEQSCEV…LRCYGDRRFW (207 aa)). Residue N622 is glycosylated (N-linked (GlcNAc...) asparagine). A Laminin G-like 3 domain is found at 791–956 (NAVSFYTEAS…KVTSGVRPGC (166 aa)). Intrachain disulfides connect C929-C956, C960-C973, C967-C982, C984-C994, and C1164-C1199. The EGF-like 2 domain maps to 957 to 995 (PGHCSSYGSICHNGGKCVEKHNGYLCDCTNSPYEGPFCK). Positions 1013 to 1199 (QEPYPVTKNI…VHGTLTESSC (187 aa)) constitute a Laminin G-like 4 domain. A helical transmembrane segment spans residues 1238–1258 (AVIGGVIAVVIFIIFCIIGIM). Residues 1259 to 1306 (TRFLYQHKQSHRTSQMKEKEYPENLDSSFRNEIDLQNTVSECKREYFI) lie on the Cytoplasmic side of the membrane.

Belongs to the neurexin family.

The protein localises to the membrane. Functionally, may play a role in the correct development and proper functioning of the peripheral and central nervous system and be involved in cell adhesion and intercellular communication. The chain is Contactin-associated protein-like 5 (CNTNAP5) from Homo sapiens (Human).